Here is a 959-residue protein sequence, read N- to C-terminus: Glutamate receptor 3.4 (959 aa).

An N-terminal signal peptide occupies residues 1-35 (MGFLVMIREVSMAKAIRVVLLCVSVLWVVPKECAC). At 36 to 613 (RSNFSRNSSS…SPWSFLKPFT (578 aa)) the chain is on the extracellular side. 9 N-linked (GlcNAc...) asparagine glycosylation sites follow: Asn-38, Asn-42, Asn-108, Asn-365, Asn-378, Asn-404, Asn-443, Asn-461, and Asn-576. The chain crosses the membrane as a helical span at residues 614-634 (IEMWAVTGGFFLFVGAMVWIL). The Cytoplasmic portion of the chain corresponds to 635 to 643 (EHRFNQEFR). A helical membrane pass occupies residues 644 to 664 (GPPRRQLITIFWFSFSTMFFS). Topologically, residues 665-675 (HRENTVSSLGR) are cytoplasmic. The chain crosses the membrane as a helical span at residues 676 to 696 (FVLIIWLFVVLIINSSYTASL). Topologically, residues 697 to 857 (TSILTIRQLT…SEDSQLSLKS (161 aa)) are extracellular. The helical transmembrane segment at 858-878 (FWGLFLICGITCFMALTVFFW) threads the bilayer. Residues 879 to 959 (RVFWQYQRLL…TSQSQHGEIT (81 aa)) lie on the Cytoplasmic side of the membrane. 2 disordered regions span residues 893–913 (DEER…SRAP) and 936–959 (KSSK…GEIT). A compositionally biased stretch (low complexity) spans 943–959 (STQSAAGTSQSQHGEIT).

This sequence belongs to the glutamate-gated ion channel (TC 1.A.10.1) family. In terms of assembly, forms a heteromeric channel with GLR3.2. In terms of tissue distribution, highly expressed in roots and at lower levels in leaves and siliques. Expressed in seedlings, cotyledons, roots (e.g. root hairs, epidermis and cortex cells), stems, leaves (e.g. vascular bundles and hydathodes), and siliques. Expressed in root phloem.

It is found in the cell membrane. The protein resides in the plastid. The protein localises to the chloroplast membrane. Functionally, glutamate-gated receptor that probably acts as a non-selective cation channel, at least in hypocotyls. Can be triggered by Asn, Ser, Gly and, to a lower extent, Ala, Cys and Glu. May be involved in light-signal transduction and calcium homeostasis via the regulation of calcium influx into cells. Plays an important role in the calcium-based fast transmission of environmental stress. Acts as a negative regulator of lateral root initiation and development. May restrict primordia numbers and position along the root axis by a signaling process originating in the phloem. AtGLR3.4-mediated cytosolic calcium influx may be involved in the regulation of seed germination under salt stress by modulating sodium accumulation through the SOS pathway. The chain is Glutamate receptor 3.4 from Arabidopsis thaliana (Mouse-ear cress).